A 248-amino-acid chain; its full sequence is 2,3-bisphosphoglycerate-dependent phosphoglycerate mutase (248 aa).

Residues arginine 10–asparagine 17, threonine 23–glycine 24, arginine 62, glutamate 89–tyrosine 92, lysine 100, arginine 116–arginine 117, and glycine 183–asparagine 184 each bind substrate. Catalysis depends on histidine 11, which acts as the Tele-phosphohistidine intermediate. Residue glutamate 89 is the Proton donor/acceptor of the active site.

The protein belongs to the phosphoglycerate mutase family. BPG-dependent PGAM subfamily.

The catalysed reaction is (2R)-2-phosphoglycerate = (2R)-3-phosphoglycerate. It functions in the pathway carbohydrate degradation; glycolysis; pyruvate from D-glyceraldehyde 3-phosphate: step 3/5. In terms of biological role, catalyzes the interconversion of 2-phosphoglycerate and 3-phosphoglycerate. The protein is 2,3-bisphosphoglycerate-dependent phosphoglycerate mutase of Corynebacterium glutamicum (strain ATCC 13032 / DSM 20300 / JCM 1318 / BCRC 11384 / CCUG 27702 / LMG 3730 / NBRC 12168 / NCIMB 10025 / NRRL B-2784 / 534).